The primary structure comprises 1057 residues: Carbamoyl phosphate synthase large chain (1057 aa).

Residues 1 to 401 (MPKRQDIETI…SLLKAIRSLE (401 aa)) are carboxyphosphate synthetic domain. 12 residues coordinate ATP: arginine 129, arginine 169, glycine 175, glycine 176, lysine 208, isoleucine 210, glutamate 215, glycine 241, isoleucine 242, histidine 243, glutamine 284, and glutamate 298. The region spanning 133–327 (RTLMNDLGVP…IAKLAAKIAI (195 aa)) is the ATP-grasp 1 domain. Residues glutamine 284, glutamate 298, and asparagine 300 each contribute to the Mg(2+) site. The Mn(2+) site is built by glutamine 284, glutamate 298, and asparagine 300. The tract at residues 402-546 (YGVHHLGLPN…YGTYEYENES (145 aa)) is oligomerization domain. Residues 547-929 (VVTEKEKILV…ALFKGLTASG (383 aa)) form a carbamoyl phosphate synthetic domain region. The ATP-grasp 2 domain occupies 671-861 (EALLHTIDVP…MAQLAMRAII (191 aa)). ATP is bound by residues arginine 707, arginine 746, leucine 748, glutamate 752, glycine 777, valine 778, histidine 779, serine 780, glutamine 820, and glutamate 832. Glutamine 820, glutamate 832, and asparagine 834 together coordinate Mg(2+). The Mn(2+) site is built by glutamine 820, glutamate 832, and asparagine 834. The region spanning 930-1057 (MEVKDHGTVL…ESMTFTMKNM (128 aa)) is the MGS-like domain. The tract at residues 930–1057 (MEVKDHGTVL…ESMTFTMKNM (128 aa)) is allosteric domain.

This sequence belongs to the CarB family. In terms of assembly, composed of two chains; the small (or glutamine) chain promotes the hydrolysis of glutamine to ammonia, which is used by the large (or ammonia) chain to synthesize carbamoyl phosphate. Tetramer of heterodimers (alpha,beta)4. Requires Mg(2+) as cofactor. It depends on Mn(2+) as a cofactor.

It carries out the reaction hydrogencarbonate + L-glutamine + 2 ATP + H2O = carbamoyl phosphate + L-glutamate + 2 ADP + phosphate + 2 H(+). The enzyme catalyses hydrogencarbonate + NH4(+) + 2 ATP = carbamoyl phosphate + 2 ADP + phosphate + 2 H(+). The protein operates within amino-acid biosynthesis; L-arginine biosynthesis; carbamoyl phosphate from bicarbonate: step 1/1. Its pathway is pyrimidine metabolism; UMP biosynthesis via de novo pathway; (S)-dihydroorotate from bicarbonate: step 1/3. Large subunit of the glutamine-dependent carbamoyl phosphate synthetase (CPSase). CPSase catalyzes the formation of carbamoyl phosphate from the ammonia moiety of glutamine, carbonate, and phosphate donated by ATP, constituting the first step of 2 biosynthetic pathways, one leading to arginine and/or urea and the other to pyrimidine nucleotides. The large subunit (synthetase) binds the substrates ammonia (free or transferred from glutamine from the small subunit), hydrogencarbonate and ATP and carries out an ATP-coupled ligase reaction, activating hydrogencarbonate by forming carboxy phosphate which reacts with ammonia to form carbamoyl phosphate. This chain is Carbamoyl phosphate synthase large chain, found in Staphylococcus saprophyticus subsp. saprophyticus (strain ATCC 15305 / DSM 20229 / NCIMB 8711 / NCTC 7292 / S-41).